The primary structure comprises 268 residues: Tryptophan synthase alpha chain (268 aa).

Catalysis depends on proton acceptor residues Glu40 and Asp51.

Belongs to the TrpA family. In terms of assembly, tetramer of two alpha and two beta chains.

It carries out the reaction (1S,2R)-1-C-(indol-3-yl)glycerol 3-phosphate + L-serine = D-glyceraldehyde 3-phosphate + L-tryptophan + H2O. Its pathway is amino-acid biosynthesis; L-tryptophan biosynthesis; L-tryptophan from chorismate: step 5/5. Functionally, the alpha subunit is responsible for the aldol cleavage of indoleglycerol phosphate to indole and glyceraldehyde 3-phosphate. The sequence is that of Tryptophan synthase alpha chain from Geobacillus kaustophilus (strain HTA426).